Consider the following 294-residue polypeptide: Transcription repressor OFP14 (294 aa).

Over residues 49–60 (SFKHRRRSSKTR) the composition is skewed to basic residues. Disordered regions lie at residues 49–72 (SFKH…HQDS), 96–129 (DDQE…DDDD), and 141–185 (AVYD…SRST). Composition is skewed to basic and acidic residues over residues 61–72 (FSKEEPVYHQDS) and 96–117 (DDQE…RESS). A compositionally biased stretch (acidic residues) spans 118 to 128 (SDDSDDDDDDD). A compositionally biased stretch (low complexity) spans 164-185 (SSEGRPSMETTSTSSERQSRST). The OVATE domain occupies 195–259 (VLRYTDEPQE…LSAFVDLIIA (65 aa)).

As to quaternary structure, interacts with KNAT2 and KNAT3. In terms of tissue distribution, expressed in roots, rosette and cauline leaves, shoots, stems, flower buds and siliques.

The protein resides in the nucleus. In terms of biological role, transcriptional repressor that may regulate multiple aspects of plant growth and development through the regulation of BEL1-LIKE (BLH) and KNOX TALE (KNAT) homeodomain transcription factors. The sequence is that of Transcription repressor OFP14 (OFP14) from Arabidopsis thaliana (Mouse-ear cress).